The following is a 257-amino-acid chain: Pantothenate synthetase (257 aa).

Residue 29–36 (MGNLHAGH) coordinates ATP. The active-site Proton donor is His-36. Gln-60 contributes to the (R)-pantoate binding site. Residue Gln-60 participates in beta-alanine binding. 145–148 (GEKD) provides a ligand contact to ATP. Gln-151 serves as a coordination point for (R)-pantoate. Residues Val-174 and 182–185 (LSSR) each bind ATP.

This sequence belongs to the pantothenate synthetase family. As to quaternary structure, homodimer.

Its subcellular location is the cytoplasm. The enzyme catalyses (R)-pantoate + beta-alanine + ATP = (R)-pantothenate + AMP + diphosphate + H(+). The protein operates within cofactor biosynthesis; (R)-pantothenate biosynthesis; (R)-pantothenate from (R)-pantoate and beta-alanine: step 1/1. Functionally, catalyzes the condensation of pantoate with beta-alanine in an ATP-dependent reaction via a pantoyl-adenylate intermediate. The chain is Pantothenate synthetase from Coxiella burnetii (strain Dugway 5J108-111).